Reading from the N-terminus, the 481-residue chain is Glutamate--tRNA ligase 2 (481 aa).

Positions 17-27 match the 'HIGH' region motif; sequence PSPTGFLHIGG. A compositionally biased stretch (basic and acidic residues) spans 118 to 139; it reads AEQRAKKQPQRYDGRWRDRDPS. The interval 118-143 is disordered; sequence AEQRAKKQPQRYDGRWRDRDPSEAPA. Positions 246-250 match the 'KMSKS' region motif; it reads KLSKR. Lysine 249 is an ATP binding site.

The protein belongs to the class-I aminoacyl-tRNA synthetase family. Glutamate--tRNA ligase type 1 subfamily. Monomer.

It localises to the cytoplasm. The enzyme catalyses tRNA(Glu) + L-glutamate + ATP = L-glutamyl-tRNA(Glu) + AMP + diphosphate. In terms of biological role, catalyzes the attachment of glutamate to tRNA(Glu) in a two-step reaction: glutamate is first activated by ATP to form Glu-AMP and then transferred to the acceptor end of tRNA(Glu). This is Glutamate--tRNA ligase 2 from Zymomonas mobilis subsp. mobilis (strain ATCC 31821 / ZM4 / CP4).